The primary structure comprises 410 residues: Probable nicotinate phosphoribosyltransferase (410 aa).

The nicotinate site is built by tyrosine 15, phenylalanine 170, and threonine 220. Histidine 223 carries the phosphohistidine modification. Threonine 348 is a binding site for 5-phospho-alpha-D-ribose 1-diphosphate.

It belongs to the NAPRTase family. Requires Mg(2+) as cofactor. The cofactor is Mn(2+). Post-translationally, transiently phosphorylated on a His residue during the reaction cycle. Phosphorylation strongly increases the affinity for substrates and increases the rate of nicotinate D-ribonucleotide production. Dephosphorylation regenerates the low-affinity form of the enzyme, leading to product release.

The catalysed reaction is nicotinate + 5-phospho-alpha-D-ribose 1-diphosphate + ATP + H2O = nicotinate beta-D-ribonucleotide + ADP + phosphate + diphosphate. The protein operates within cofactor biosynthesis; NAD(+) biosynthesis; nicotinate D-ribonucleotide from nicotinate: step 1/1. Functionally, catalyzes the first step in the biosynthesis of NAD from nicotinic acid, the ATP-dependent synthesis of beta-nicotinate D-ribonucleotide from nicotinate and 5-phospho-D-ribose 1-phosphate. Helps prevent cellular oxidative stress via its role in NAD biosynthesis. This chain is Probable nicotinate phosphoribosyltransferase, found in Schizosaccharomyces pombe (strain 972 / ATCC 24843) (Fission yeast).